The primary structure comprises 220 residues: Vesicle-associated membrane protein 7 (220 aa).

The Cytoplasmic segment spans residues 2–188; it reads AILFAVVARG…ARAMCMKNLK (187 aa). The 104-residue stretch at 7–110 folds into the Longin domain; that stretch reads VVARGTTILA…AMNSEFSSVL (104 aa). Residues 125-185 form the v-SNARE coiled-coil homology domain; it reads QVAETQAQVD…RNLARAMCMK (61 aa). Residues 189–209 traverse the membrane as a helical; Anchor for type IV membrane protein segment; it reads LTIIIIIVSIVIIYIIVSAAC. Over 210-220 the chain is Vesicular; that stretch reads GGLAWPSCVQK.

It belongs to the synaptobrevin family.

The protein resides in the cytoplasmic vesicle. It localises to the secretory vesicle membrane. Its subcellular location is the golgi apparatus. The protein localises to the trans-Golgi network membrane. It is found in the late endosome membrane. The protein resides in the lysosome membrane. It localises to the endoplasmic reticulum membrane. Its subcellular location is the phagosome membrane. The protein localises to the synapse. It is found in the synaptosome. In terms of biological role, involved in the targeting and/or fusion of transport vesicles to their target membrane during transport of proteins from the early endosome to the lysosome. Required for heterotypic fusion of late endosomes with lysosomes and homotypic lysosomal fusion. Required for calcium regulated lysosomal exocytosis. Involved in the export of chylomicrons from the endoplasmic reticulum to the cis Golgi. Required for focal exocytosis of late endocytic vesicles during phagosome formation. This is Vesicle-associated membrane protein 7 from Gallus gallus (Chicken).